The chain runs to 283 residues: Pantothenate synthetase (283 aa).

An ATP-binding site is contributed by 30–37 (MGALHRGH). His37 functions as the Proton donor in the catalytic mechanism. Gln61 lines the (R)-pantoate pocket. Gln61 serves as a coordination point for beta-alanine. 147–150 (GQKD) is a binding site for ATP. Gln153 provides a ligand contact to (R)-pantoate. ATP-binding positions include Ile176 and 184-187 (MSSR).

This sequence belongs to the pantothenate synthetase family. In terms of assembly, homodimer.

Its subcellular location is the cytoplasm. It catalyses the reaction (R)-pantoate + beta-alanine + ATP = (R)-pantothenate + AMP + diphosphate + H(+). It functions in the pathway cofactor biosynthesis; (R)-pantothenate biosynthesis; (R)-pantothenate from (R)-pantoate and beta-alanine: step 1/1. Functionally, catalyzes the condensation of pantoate with beta-alanine in an ATP-dependent reaction via a pantoyl-adenylate intermediate. The chain is Pantothenate synthetase from Cytophaga hutchinsonii (strain ATCC 33406 / DSM 1761 / CIP 103989 / NBRC 15051 / NCIMB 9469 / D465).